The primary structure comprises 460 residues: Citrate synthase, peroxisomal (460 aa).

Ser-21 carries the phosphoserine modification. Residues Lys-218 and Lys-239 each participate in a glycyl lysine isopeptide (Lys-Gly) (interchain with G-Cter in ubiquitin) cross-link. Catalysis depends on residues His-293 and His-339. Residues Lys-354 and Lys-385 each participate in a glycyl lysine isopeptide (Lys-Gly) (interchain with G-Cter in ubiquitin) cross-link. Residue Asp-394 is part of the active site. The C-terminal peroxisome targeting signal (PTS1) motif lies at 458 to 460; sequence SKL.

The protein belongs to the citrate synthase family. As to quaternary structure, interacts with F-box protein UCC1. Ubiquitinated by the E3 ubiquitin-protein ligase complex SCF(UCC1), which leads to its degradation by the proteasome. Ubiquitination is prevented by oxaloacetate, suggesting the existence of an oxaloacetate-dependent positive feedback loop that stabilizes CIT2.

It localises to the cytoplasm. Its subcellular location is the peroxisome. The enzyme catalyses oxaloacetate + acetyl-CoA + H2O = citrate + CoA + H(+). Its pathway is carbohydrate metabolism; tricarboxylic acid cycle; isocitrate from oxaloacetate: step 1/2. Peroxisomal citrate synthase involved in the citrate homeostasis. Catalyzes the condensation of acetyl coenzyme A and oxaloacetate to form citrate. Citrate synthase is the rate-limiting enzyme of the tricarboxylic acid (TCA) cycle. The polypeptide is Citrate synthase, peroxisomal (Saccharomyces cerevisiae (strain ATCC 204508 / S288c) (Baker's yeast)).